The sequence spans 176 residues: Peptide deformylase 1 (176 aa).

Fe cation is bound by residues cysteine 99 and histidine 141. The active site involves glutamate 142. Histidine 145 is a Fe cation binding site.

Belongs to the polypeptide deformylase family. Requires Fe(2+) as cofactor.

It catalyses the reaction N-terminal N-formyl-L-methionyl-[peptide] + H2O = N-terminal L-methionyl-[peptide] + formate. In terms of biological role, removes the formyl group from the N-terminal Met of newly synthesized proteins. Requires at least a dipeptide for an efficient rate of reaction. N-terminal L-methionine is a prerequisite for activity but the enzyme has broad specificity at other positions. In Bordetella pertussis (strain Tohama I / ATCC BAA-589 / NCTC 13251), this protein is Peptide deformylase 1.